The following is a 459-amino-acid chain: UDP-N-acetylmuramoylalanine--D-glutamate ligase (459 aa).

Position 131 to 137 (131 to 137 (GANGKST)) interacts with ATP.

This sequence belongs to the MurCDEF family.

It localises to the cytoplasm. It carries out the reaction UDP-N-acetyl-alpha-D-muramoyl-L-alanine + D-glutamate + ATP = UDP-N-acetyl-alpha-D-muramoyl-L-alanyl-D-glutamate + ADP + phosphate + H(+). Its pathway is cell wall biogenesis; peptidoglycan biosynthesis. In terms of biological role, cell wall formation. Catalyzes the addition of glutamate to the nucleotide precursor UDP-N-acetylmuramoyl-L-alanine (UMA). The polypeptide is UDP-N-acetylmuramoylalanine--D-glutamate ligase (Methylococcus capsulatus (strain ATCC 33009 / NCIMB 11132 / Bath)).